A 1558-amino-acid polypeptide reads, in one-letter code: ABC transporter NFT1 (1558 aa).

At 1-29 the chain is on the extracellular side; it reads MIKNGTCPFWERDDLSECARREYIEFKFP. N-linked (GlcNAc...) asparagine glycosylation is present at Asn-4. The chain crosses the membrane as a helical span at residues 30-50; sequence LFILLTGMIYAFCKVFRAFYL. Topologically, residues 51–103 are cytoplasmic; it reads RRKNHTNEAPEFEEQGNGNHEYARFSVLRLKSAWESRSFCNVNNRSTFDKFKK. A helical transmembrane segment spans residues 104–124; the sequence is FIEGAFIVLQLTIHLYILSNM. Over 125 to 130 the chain is Extracellular; it reads PMDNKK. Residues 131-151 form a helical membrane-spanning segment; it reads FFHQGFLVQMFLWILLLVVIT. At 152–169 the chain is on the cytoplasmic side; that stretch reads LRLISASQSFRWVLACKR. A helical membrane pass occupies residues 170–190; that stretch reads DLWAVSFYSYASLFTLSILPL. The Extracellular portion of the chain corresponds to 191 to 201; it reads RSVFIGKIKDK. The helical transmembrane segment at 202–222 threads the bilayer; it reads IMVKYIISETFIDLALLLLLS. Residues 223–302 lie on the Cytoplasmic side of the membrane; the sequence is TSSIEGTRYS…SSKKGRLLPN (80 aa). Residues 303-323 form a helical membrane-spanning segment; it reads IICYFKAVFISQLFLAFVSSF. Residues 311–621 enclose the ABC transmembrane type-1 1 domain; that stretch reads FISQLFLAFV…IASTVSLLIQ (311 aa). Residues 324-351 lie on the Extracellular side of the membrane; sequence LNFVPSLLMPRILSYVNDPKSQSWNLVS. A helical transmembrane segment spans residues 352–374; the sequence is LYVSSMLVSKIIATTCRGQGLFL. Topologically, residues 375–449 are cytoplasmic; that stretch reads GEKGTMQLRT…VMSIDAFKVS (75 aa). Residues 410–434 are disordered; it reads NASTSFEENPDSSEAEPRKKSSRKD. Positions 424–434 are enriched in basic and acidic residues; that stretch reads AEPRKKSSRKD. The helical transmembrane segment at 450–470 threads the bilayer; that stretch reads EAMNTFYLACEAVFMTVTALM. Residues 471 to 481 lie on the Extracellular side of the membrane; it reads ILYSLLGWSAF. The chain crosses the membrane as a helical span at residues 482 to 504; the sequence is AGTFALLAMIPLNFWCATFYGNY. Over 505–558 the chain is Cytoplasmic; it reads QADQLILTDKRTSGISEALNSIRVIKLLAWENLFYQKIINVRDGEIRLLKKKAT. The chain crosses the membrane as a helical span at residues 559 to 579; that stretch reads IFFLNHLIWFFGPTLVSAITF. Over 580–584 the chain is Extracellular; sequence SVFIK. The helical transmembrane segment at 585–605 threads the bilayer; it reads FQNQTLTPTIAFTALSLFAIL. Over 606-953 the chain is Cytoplasmic; that stretch reads RTPMDQIAST…KFSAYKWLAD (348 aa). In terms of domain architecture, ABC transporter 1 spans 651–892; it reads FGFEDASMEW…NEFLRESINN (242 aa). ATP is bound at residue 686 to 693; sequence GPTGSGKS. The segment covering 892–901 has biased composition (polar residues); the sequence is NDSKNTTHNQ. The disordered stretch occupies residues 892–926; sequence NDSKNTTHNQIDLKRSTTSKKTKNGDPEGENSQDE. The helical transmembrane segment at 954–974 threads the bilayer; the sequence is YFGGLGVVFVFTSSAILIHGI. Residues 961–1251 enclose the ABC transmembrane type-1 2 domain; the sequence is VFVFTSSAIL…IIKVFSSVEL (291 aa). At 975–1013 the chain is on the extracellular side; the sequence is TLSQGFWLRYWLETGSSGSKSTWLYRIVEGHSNIYFILT. Residues 1014–1034 traverse the membrane as a helical segment; it reads YIVIGFVSSFLTSGKVWIAII. At 1035–1082 the chain is on the cytoplasmic side; that stretch reads SGTNVTKKIFAKLLSSILYAKLRFHNVTPTGRIMNRFSKDMDIIDQQL. The helical transmembrane segment at 1083–1105 threads the bilayer; that stretch reads IPNFEGLSYSVVVCLWIILLIGY. Topologically, residues 1106-1109 are extracellular; sequence VTPQ. Residues 1110–1132 form a helical membrane-spanning segment; it reads FLLFAIPLCALYYTVCTLYLRAS. Residues 1133 to 1199 are Cytoplasmic-facing; it reads RELKRIDNIN…ATEWITYRVD (67 aa). The helical transmembrane segment at 1200-1220 threads the bilayer; the sequence is IIGTLVLFSSSVMIIMKASYL. Residues 1221–1222 lie on the Extracellular side of the membrane; it reads DA. Residues 1223-1243 form a helical membrane-spanning segment; the sequence is GLAGILLSNAFSFTETAQWII. At 1244 to 1558 the chain is on the cytoplasmic side; the sequence is KVFSSVELLM…LAKVSFDNKR (315 aa). The 254-residue stretch at 1285–1538 folds into the ABC transporter 2 domain; it reads VELKNLSLRY…RNTIFYRLCR (254 aa). 1319–1326 contacts ATP; that stretch reads GRTGAGKS.

Belongs to the ABC transporter superfamily. ABCC family. Conjugate transporter (TC 3.A.1.208) subfamily.

It is found in the membrane. The chain is ABC transporter NFT1 (NFT1) from Saccharomyces cerevisiae (strain YJM789) (Baker's yeast).